Reading from the N-terminus, the 393-residue chain is Formate-dependent phosphoribosylglycinamide formyltransferase (393 aa).

N(1)-(5-phospho-beta-D-ribosyl)glycinamide contacts are provided by residues 15 to 16 (EL) and Glu75. Residues Arg107, Lys148, 153–158 (SSGKGQ), 188–191 (EEYI), and Glu196 contribute to the ATP site. The ATP-grasp domain maps to 112–302 (NLAAEKLAIK…EFELHLRAIL (191 aa)). Residues Glu261 and Glu273 each coordinate Mg(2+). Residues Asp280, Lys350, and 357 to 358 (RR) contribute to the N(1)-(5-phospho-beta-D-ribosyl)glycinamide site.

It belongs to the PurK/PurT family. Homodimer.

The enzyme catalyses N(1)-(5-phospho-beta-D-ribosyl)glycinamide + formate + ATP = N(2)-formyl-N(1)-(5-phospho-beta-D-ribosyl)glycinamide + ADP + phosphate + H(+). It functions in the pathway purine metabolism; IMP biosynthesis via de novo pathway; N(2)-formyl-N(1)-(5-phospho-D-ribosyl)glycinamide from N(1)-(5-phospho-D-ribosyl)glycinamide (formate route): step 1/1. Its function is as follows. Involved in the de novo purine biosynthesis. Catalyzes the transfer of formate to 5-phospho-ribosyl-glycinamide (GAR), producing 5-phospho-ribosyl-N-formylglycinamide (FGAR). Formate is provided by PurU via hydrolysis of 10-formyl-tetrahydrofolate. The sequence is that of Formate-dependent phosphoribosylglycinamide formyltransferase from Prochlorococcus marinus (strain SARG / CCMP1375 / SS120).